We begin with the raw amino-acid sequence, 172 residues long: Protein-export protein SecB (172 aa).

This sequence belongs to the SecB family. Homotetramer, a dimer of dimers. One homotetramer interacts with 1 SecA dimer.

The protein localises to the cytoplasm. In terms of biological role, one of the proteins required for the normal export of preproteins out of the cell cytoplasm. It is a molecular chaperone that binds to a subset of precursor proteins, maintaining them in a translocation-competent state. It also specifically binds to its receptor SecA. The sequence is that of Protein-export protein SecB from Dinoroseobacter shibae (strain DSM 16493 / NCIMB 14021 / DFL 12).